The primary structure comprises 378 residues: Quinolinate synthase (378 aa).

Iminosuccinate contacts are provided by H59 and S80. [4Fe-4S] cluster is bound at residue C125. Iminosuccinate is bound by residues 151-153 (YAN) and S168. A [4Fe-4S] cluster-binding site is contributed by C212. Residues 238 to 240 (HPE) and T255 each bind iminosuccinate. [4Fe-4S] cluster is bound at residue C309.

Belongs to the quinolinate synthase family. Type 1 subfamily. [4Fe-4S] cluster serves as cofactor.

The protein localises to the cytoplasm. The enzyme catalyses iminosuccinate + dihydroxyacetone phosphate = quinolinate + phosphate + 2 H2O + H(+). It functions in the pathway cofactor biosynthesis; NAD(+) biosynthesis; quinolinate from iminoaspartate: step 1/1. Its function is as follows. Catalyzes the condensation of iminoaspartate with dihydroxyacetone phosphate to form quinolinate. This Burkholderia pseudomallei (strain 1106a) protein is Quinolinate synthase.